We begin with the raw amino-acid sequence, 268 residues long: Tryptophan synthase alpha chain (268 aa).

Residues Glu49 and Asp60 each act as proton acceptor in the active site.

It belongs to the TrpA family. In terms of assembly, tetramer of two alpha and two beta chains.

It carries out the reaction (1S,2R)-1-C-(indol-3-yl)glycerol 3-phosphate + L-serine = D-glyceraldehyde 3-phosphate + L-tryptophan + H2O. Its pathway is amino-acid biosynthesis; L-tryptophan biosynthesis; L-tryptophan from chorismate: step 5/5. The alpha subunit is responsible for the aldol cleavage of indoleglycerol phosphate to indole and glyceraldehyde 3-phosphate. The polypeptide is Tryptophan synthase alpha chain (Haemophilus influenzae (strain 86-028NP)).